The sequence spans 343 residues: Cytosolic Fe-S cluster assembly factor CFD1 (343 aa).

15–22 (GKGGVGKS) contacts ATP. Composition is skewed to polar residues over residues 80–91 (PSSDGLNGSQRA) and 99–110 (ESSSSTVETAPQ). A disordered region spans residues 80-110 (PSSDGLNGSQRANKPDDSNESSSSTVETAPQ). Residues C241 and C244 each contribute to the [4Fe-4S] cluster site.

The protein belongs to the Mrp/NBP35 ATP-binding proteins family. NUBP2/CFD1 subfamily. Heterotetramer of 2 NBP35 and 2 CFD1 chains. [4Fe-4S] cluster is required as a cofactor.

It is found in the cytoplasm. In terms of biological role, component of the cytosolic iron-sulfur (Fe/S) protein assembly (CIA) machinery. Required for maturation of extramitochondrial Fe-S proteins. The NBP35-CFD1 heterotetramer forms a Fe-S scaffold complex, mediating the de novo assembly of an Fe-S cluster and its transfer to target apoproteins. The polypeptide is Cytosolic Fe-S cluster assembly factor CFD1 (Coccidioides immitis (strain RS) (Valley fever fungus)).